A 531-amino-acid polypeptide reads, in one-letter code: Bifunctional protein TrpGD (531 aa).

One can recognise a Glutamine amidotransferase type-1 domain in the interval 3–196 (DILLLDNIDS…LAWAQQKLEP (194 aa)). 57–59 (GPG) serves as a coordination point for L-glutamine. Catalysis depends on Cys-84, which acts as the Nucleophile; for GATase activity. Residues Gln-88 and 134-135 (SL) contribute to the L-glutamine site. Catalysis depends on for GATase activity residues His-170 and Glu-172. Residues 202–531 (PILEKLYQAQ…DRVTALAARG (330 aa)) form an anthranilate phosphoribosyltransferase region.

The protein in the C-terminal section; belongs to the anthranilate phosphoribosyltransferase family. Monomer. Heterotetramer consisting of two non-identical subunits: a beta subunit (TrpG) and a large alpha subunit (TrpE).

It catalyses the reaction chorismate + L-glutamine = anthranilate + pyruvate + L-glutamate + H(+). The enzyme catalyses N-(5-phospho-beta-D-ribosyl)anthranilate + diphosphate = 5-phospho-alpha-D-ribose 1-diphosphate + anthranilate. The protein operates within amino-acid biosynthesis; L-tryptophan biosynthesis; L-tryptophan from chorismate: step 1/5. It participates in amino-acid biosynthesis; L-tryptophan biosynthesis; L-tryptophan from chorismate: step 2/5. Cooperatively feedback inhibited by tryptophan. In terms of biological role, part of a heterotetrameric complex that catalyzes the two-step biosynthesis of anthranilate, an intermediate in the biosynthesis of L-tryptophan. In the first step, the glutamine-binding beta subunit (TrpG) of anthranilate synthase (AS) provides the glutamine amidotransferase activity which generates ammonia as a substrate that, along with chorismate, is used in the second step, catalyzed by the large alpha subunit of AS (TrpE) to produce anthranilate. In the absence of TrpG, TrpE can synthesize anthranilate directly from chorismate and high concentrations of ammonia. In addition to synthesizing anthranilate, it also catalyzes the second step of the pathway, the transfer of the phosphoribosyl group of 5-phosphorylribose-1-pyrophosphate (PRPP) to anthranilate. This is Bifunctional protein TrpGD (trpGD) from Salmonella typhimurium (strain LT2 / SGSC1412 / ATCC 700720).